A 443-amino-acid chain; its full sequence is Probable D-serine dehydratase (443 aa).

An N6-(pyridoxal phosphate)lysine modification is found at lysine 118.

It belongs to the serine/threonine dehydratase family. DsdA subfamily. Requires pyridoxal 5'-phosphate as cofactor.

It carries out the reaction D-serine = pyruvate + NH4(+). This Aeromonas salmonicida (strain A449) protein is Probable D-serine dehydratase.